Consider the following 729-residue polypeptide: Catalase-peroxidase (729 aa).

The interval 1–33 is disordered; sequence MSAHNTNESAVGKCPFHEQKEEKSVLARGAGGG. Positions 15–25 are enriched in basic and acidic residues; the sequence is PFHEQKEEKSV. The segment at residues 108-229 is a cross-link (tryptophyl-tyrosyl-methioninium (Trp-Tyr) (with M-255)); sequence WHSAGTYRTV…LGATEMGLIY (122 aa). His109 (proton acceptor) is an active-site residue. The tryptophyl-tyrosyl-methioninium (Tyr-Met) (with W-108) cross-link spans 229-255; sequence YVNPEGPEASGNPASAAPAIRATFGNM. His270 lines the heme b pocket.

Belongs to the peroxidase family. Peroxidase/catalase subfamily. Homodimer or homotetramer. It depends on heme b as a cofactor. In terms of processing, formation of the three residue Trp-Tyr-Met cross-link is important for the catalase, but not the peroxidase activity of the enzyme.

The enzyme catalyses H2O2 + AH2 = A + 2 H2O. It carries out the reaction 2 H2O2 = O2 + 2 H2O. Its function is as follows. Bifunctional enzyme with both catalase and broad-spectrum peroxidase activity. This is Catalase-peroxidase from Erwinia tasmaniensis (strain DSM 17950 / CFBP 7177 / CIP 109463 / NCPPB 4357 / Et1/99).